Consider the following 287-residue polypeptide: Protease HtpX homolog (287 aa).

Helical transmembrane passes span 4 to 24 and 35 to 53; these read VGLF…VMSL and LLLM…SLAL. A Zn(2+)-binding site is contributed by H139. Residue E140 is part of the active site. H143 lines the Zn(2+) pocket. The next 2 helical transmembrane spans lie at 147–167 and 194–214; these read GDMV…IFLS and AVSM…VMWF. E219 is a binding site for Zn(2+).

It belongs to the peptidase M48B family. Zn(2+) is required as a cofactor.

It is found in the cell inner membrane. The chain is Protease HtpX homolog from Desulfotalea psychrophila (strain LSv54 / DSM 12343).